The chain runs to 236 residues: 2-C-methyl-D-erythritol 4-phosphate cytidylyltransferase (236 aa).

It belongs to the IspD/TarI cytidylyltransferase family. IspD subfamily. Homodimer.

The catalysed reaction is 2-C-methyl-D-erythritol 4-phosphate + CTP + H(+) = 4-CDP-2-C-methyl-D-erythritol + diphosphate. It participates in isoprenoid biosynthesis; isopentenyl diphosphate biosynthesis via DXP pathway; isopentenyl diphosphate from 1-deoxy-D-xylulose 5-phosphate: step 2/6. Its function is as follows. Catalyzes the formation of 4-diphosphocytidyl-2-C-methyl-D-erythritol from CTP and 2-C-methyl-D-erythritol 4-phosphate (MEP). This is 2-C-methyl-D-erythritol 4-phosphate cytidylyltransferase from Shigella flexneri serotype 5b (strain 8401).